The chain runs to 654 residues: Insulin receptor substrate 1 (654 aa).

Residues 3 to 107 (DIKKCGYLRK…WYQAILEVQA (105 aa)) form the PH domain. Tyr-36 is modified (phosphotyrosine). One can recognise an IRS-type PTB domain in the interval 126–230 (FREVWQVSVR…EAMKSLSEEF (105 aa)). A disordered region spans residues 228–329 (EEFRPRTKSQ…EYGSSPGVLE (102 aa)). Residues 235–245 (KSQSLSSTPIS) are compositionally biased toward polar residues. Ser-276 is subject to Phosphoserine. Over residues 307-321 (NESSADYGSASSDEY) the composition is skewed to polar residues. The residue at position 345 (Tyr-345) is a Phosphotyrosine; by INSR. 6 short sequence motifs (YXXM motif) span residues 345 to 348 (YISM), 384 to 387 (YAMM), 398 to 401 (YMPM), 411 to 414 (YMPM), 430 to 433 (YVMM), and 466 to 469 (YMNM). Phosphotyrosine; by INSR is present on residues Tyr-398 and Tyr-411. Tyr-430 bears the Phosphotyrosine mark. Disordered stretches follow at residues 473–494 (SRSA…GGPC) and 507–532 (YKME…VNAG). Low complexity predominate over residues 514–524 (SARASCSSSSD). Tyr-563 bears the Phosphotyrosine; by INSR mark.

As to quaternary structure, interacts with the NPXY motif of tyrosine-phosphorylated igf1r and insr via the PTB domain. Binds to phosphatidylinositol 3-kinase p85 subunit via the phosphorylated YXXM motifs.

May mediate the control of various cellular processes by insulin. When phosphorylated by the insulin receptor binds specifically to various cellular proteins containing SH2 domains such as phosphatidylinositol 3-kinase p85 subunit or grb2. Activates phosphatidylinositol 3-kinase when bound to the regulatory p85 subunit. The protein is Insulin receptor substrate 1 of Xenopus tropicalis (Western clawed frog).